We begin with the raw amino-acid sequence, 520 residues long: MSTYSKKTSYTVKSSSSGSIPRNFSSLSYSGPSMSRQSYSARSSYGGVNRGMGAGMGGGSGFISSSSAYGLGMGMGTGMGAGVVAPIQAVTVNKSLLAPLNLEIDPNIQIVRTQEKEQIKTLNNRFASFIDKVRFLEQQNKMLETKWSLLQNQTATRSNIDAMFEAYIANLRRQLDSLGNDKMKLEADLHNMQGLVEDFKNKYEDEINKRTECENEFVLIKKDVDEAYMNKVELEAKLESLTDEINFLRQIFEEEIRELQSQIKDTSVVVEMDNSRNLDMDAIVAEVRAQYEDIANRSRAEAEMWYKSKYEEMQTSANKYGDDLRSTKTEIADLNRMIQRLQSEIDAVKGQRANLENQIAEAEERGEMAVRDAKGRIKDLEDALQRAKQDMARQIREYQDLMNVKLALDIEIATYRKLLEGEEDRLATGIKAINISKQSTSYGGYPMESAGSSYSTYSSGYSSGLSGGYGGGYSGGYSGGYSSGSGYSDTVSQTKKSVVIKMIETKDGRVVSESSEVVQD.

A compositionally biased stretch (low complexity) spans 1–19 (MSTYSKKTSYTVKSSSSGS). The interval 1 to 20 (MSTYSKKTSYTVKSSSSGSI) is disordered. The tract at residues 2 to 114 (STYSKKTSYT…DPNIQIVRTQ (113 aa)) is head. Ser-28 is subject to Phosphoserine. The tract at residues 115 to 150 (EKEQIKTLNNRFASFIDKVRFLEQQNKMLETKWSLL) is coil 1A. The region spanning 115–426 (EKEQIKTLNN…KLLEGEEDRL (312 aa)) is the IF rod domain. The segment at 151 to 166 (QNQTATRSNIDAMFEA) is linker 1. The coil 1B stretch occupies residues 168 to 259 (IANLRRQLDS…QIFEEEIREL (92 aa)). The linker 12 stretch occupies residues 260 to 283 (QSQIKDTSVVVEMDNSRNLDMDAI). The segment at 284–422 (VAEVRAQYED…ATYRKLLEGE (139 aa)) is coil 2. The interval 423-520 (EDRLATGIKA…VSESSEVVQD (98 aa)) is tail.

It belongs to the intermediate filament family. As to quaternary structure, heterotetramer of two type I and two type II keratins. Keratin-8 associates with keratin-18. In terms of tissue distribution, expressed in simple epithelia.

It localises to the cytoplasm. The protein resides in the nucleus. Its subcellular location is the nucleoplasm. The protein localises to the nucleus matrix. Together with KRT19, helps to link the contractile apparatus to dystrophin at the costameres of striated muscle. This is Keratin, type II cytoskeletal 8 from Danio rerio (Zebrafish).